The sequence spans 578 residues: NADPH oxidase 4 (578 aa).

Residues 1 to 16 lie on the Cytoplasmic side of the membrane; the sequence is MAVSWRSWLANEGVKH. A helical transmembrane segment spans residues 17–37; it reads LCLFIWLSMNVLLFWKTFLLY. Over 38-62 the chain is Extracellular; the sequence is NQGPEYHYLHQMLGLGLCLSRASAS. The Ferric oxidoreductase domain occupies 58–303; that stretch reads RASASVLNLN…YCAERLYRYI (246 aa). A helical transmembrane segment spans residues 63–83; sequence VLNLNCSLILLPMCRTLLAYL. The Cytoplasmic portion of the chain corresponds to 84 to 103; that stretch reads RGSQKVPSRRTRRLLDKSRT. A helical transmembrane segment spans residues 104 to 124; sequence FHITCGVTICIFSGVHVAAHL. The Extracellular portion of the chain corresponds to 125–154; the sequence is VNALNFSVNYSEDFVELNAARYRDEDPRKL. N-linked (GlcNAc...) asparagine glycosylation is present at Asn133. A helical transmembrane segment spans residues 155-175; that stretch reads LFTTVPGLTGVCMVVVLFLMI. Residues 176–188 are Cytoplasmic-facing; that stretch reads TASTYAIRVSNYD. A helical membrane pass occupies residues 189-209; it reads IFWYTHNLFFVFYMLLTLHVS. At 210 to 424 the chain is on the extracellular side; it reads GGLLKYQTNL…SPFEESLNYE (215 aa). Residues 218–273 are E-loop; essential for H2O2 generating catalytic activity; the sequence is NLDTHPPGCISLNRTSSQNISLPEYFSEHFHEPFPEGFSKPAEFTQHKFVKICMEE. N-linked (GlcNAc...) asparagine glycosylation is present at Asn230. The interval 248 to 575 is mediates interaction with TLR4; that stretch reads HEPFPEGFSK…YGTRFEYNKE (328 aa). The region spanning 304 to 419 is the FAD-binding FR-type domain; sequence RSNKPVTIIS…DGPFGSPFEE (116 aa). The helical transmembrane segment at 425-445 threads the bilayer; it reads VSLCVAGGIGVTPFASILNTL. Residues 446–578 are Cytoplasmic-facing; the sequence is LDDWKPYKLR…RFEYNKESFS (133 aa).

As to quaternary structure, interacts with protein disulfide isomerase. Interacts with, relocalizes and stabilizes CYBA/p22phox. Interacts with TLR4. Interacts with PPP1R15A. Interacts with LRRC8A; this interaction prevents the ubiquitin-mediated degradation of LRRC8A. The cofactor is heme. Deubiquitinated by USP19. In terms of processing, N-glycosylated and glycosylation is required for its proper function. Post-translationally, N-glycosylated. As to expression, expressed by distal tubular cells in kidney cortex and in endothelial cells (at protein level). Widely expressed. Strongly expressed in kidney and to a lower extent in heart, adipocytes, hepatoma, endothelial cells, skeletal muscle, brain, several brain tumor cell lines and airway epithelial cells.

It is found in the cytoplasm. It localises to the endoplasmic reticulum membrane. Its subcellular location is the cell membrane. The protein resides in the cell junction. The protein localises to the focal adhesion. It is found in the nucleus. It localises to the nucleolus. Its subcellular location is the perinuclear region. It carries out the reaction NADPH + 2 O2 = 2 superoxide + NADP(+) + H(+). It catalyses the reaction NADPH + O2 + H(+) = H2O2 + NADP(+). Its activity is regulated as follows. Inhibited by plumbagin. Activated by phorbol 12-myristate 13-acetate (PMA). Activated by insulin. Inhibited by diphenylene iodonium. Its function is as follows. NADPH oxidase that catalyzes predominantly the reduction of oxygen to H2O2. Can also catalyze to a smaller extent, the reduction of oxygen to superoxide. May function as an oxygen sensor regulating the KCNK3/TASK-1 potassium channel and HIF1A activity. May regulate insulin signaling cascade. May play a role in apoptosis, bone resorption and lipolysaccharide-mediated activation of NFKB. May produce superoxide in the nucleus and play a role in regulating gene expression upon cell stimulation. Promotes ferroptosis, reactive oxygen species production and reduced glutathione (GSH) levels by activating NLRP3 inflammasome activation and cytokine release. Functionally, NADPH oxidase that catalyzes the generation of superoxide from molecular oxygen utilizing NADPH as an electron donor. Involved in redox signaling in vascular cells. Modulates the nuclear activation of ERK1/2 and the ELK1 transcription factor, and is capable of inducing nuclear DNA damage. Lacks superoxide-generating NADPH oxidase activity. In Homo sapiens (Human), this protein is NADPH oxidase 4 (NOX4).